A 228-amino-acid chain; its full sequence is Small ribosomal subunit protein uS3 (228 aa).

The KH type-2 domain maps to 39 to 107 (VREYLQDKLK…PVHINIEEIR (69 aa)).

It belongs to the universal ribosomal protein uS3 family. As to quaternary structure, part of the 30S ribosomal subunit. Forms a tight complex with proteins S10 and S14.

In terms of biological role, binds the lower part of the 30S subunit head. Binds mRNA in the 70S ribosome, positioning it for translation. The sequence is that of Small ribosomal subunit protein uS3 from Pseudomonas fluorescens (strain ATCC BAA-477 / NRRL B-23932 / Pf-5).